We begin with the raw amino-acid sequence, 121 residues long: Pro-glucagon (121 aa).

The first 21 residues, 1-21 (MKGAQYLAGLLLLLFVQNSIC), serve as a signal peptide directing secretion. Positions 80-85 (SNGGSA) are excised as a propeptide.

It belongs to the glucagon family.

The protein localises to the secreted. Functionally, plays a key role in glucose metabolism and homeostasis. Regulates blood glucose by increasing gluconeogenesis and decreasing glycolysis. The protein is Pro-glucagon (gcg) of Carassius auratus (Goldfish).